The chain runs to 745 residues: MKESFYIEGMTCTACSSGIERSLGRKSFVKKIEVSLLNKSANIEFNENETNLDEIFKLIEKLGYSPKKTLAEEKKEFFSPNVKLALAVIFTLFVVYLSMGAMLSPSLLPESLLAINNHSNFLNACLQLIGALIVMHLGRDFYIQGFKALWHRQPNMSSLIAIGTSAALISSLWQLYLVYTNHYTDQWSYGHYYFESVCVILMFVMVGKRIENVSKDKALDAMQALMKNAPKTALKMQNNQQIEVLVDSIVVGDILKVLPGSAIAVDGEIIEGEGELDESMLSGEALPVYKKVGDKVFSGTLNSHTSFLMKATQNNKNSTLSQIIEMIHNAQSSKAEISRLADKVSSVFVPSVIAIAILAFVVWLIIAPKPDFWWNFGIALEVFVSVLVISCPCALGLATPMSILVANQKASSLGLFFKDAKSLEKARLVNTIVFDKTGTLTNGKPVVKSVHSKIELLELLSLAGSIEKSSEHVIAKGIVEYAKERNAPLKEMSEVKVKTGFGISAKTDYQGIKEIIKVGNSEFFNPINTLEIKENGILVFVGRAISEKEDELLGVFVLEDLPKKGVKEHIAQIKNLGINTFLLSGDNRENVKKCALELGIDGYISNAKPQDKLNKIKELKEQGQIVMMVGDGLNDAPSLAMNDVAVVMAKGSDVSVQAADIVSFNNDIKSVYSAIKLSQATIKNIKENLFWAFCYNSVFIPLACGVLYKANIMLSPAIAGLAMSLSSVSVVLNSQRLRNFKIKDH.

The HMA domain maps to 1-67; that stretch reads MKESFYIEGM…LIEKLGYSPK (67 aa). Over 1 to 83 the chain is Cytoplasmic; sequence MKESFYIEGM…KKEFFSPNVK (83 aa). 2 residues coordinate Cu cation: C12 and C15. The chain crosses the membrane as a helical span at residues 84-104; that stretch reads LALAVIFTLFVVYLSMGAMLS. Topologically, residues 105–124 are extracellular; the sequence is PSLLPESLLAINNHSNFLNA. A helical transmembrane segment spans residues 125–144; it reads CLQLIGALIVMHLGRDFYIQ. Topologically, residues 145–151 are cytoplasmic; that stretch reads GFKALWH. Residues 152-172 traverse the membrane as a helical segment; it reads RQPNMSSLIAIGTSAALISSL. The Extracellular segment spans residues 173 to 194; it reads WQLYLVYTNHYTDQWSYGHYYF. The helical transmembrane segment at 195 to 215 threads the bilayer; sequence ESVCVILMFVMVGKRIENVSK. At 216–343 the chain is on the cytoplasmic side; it reads DKALDAMQAL…KAEISRLADK (128 aa). The chain crosses the membrane as a helical span at residues 344–366; it reads VSSVFVPSVIAIAILAFVVWLII. Topologically, residues 367-379 are extracellular; it reads APKPDFWWNFGIA. The chain crosses the membrane as a helical span at residues 380–397; it reads LEVFVSVLVISCPCALGL. Residues 398-685 lie on the Cytoplasmic side of the membrane; the sequence is ATPMSILVAN…KLSQATIKNI (288 aa). Catalysis depends on D435, which acts as the 4-aspartylphosphate intermediate. D631 and D635 together coordinate Mg(2+). The helical transmembrane segment at 686-705 threads the bilayer; sequence KENLFWAFCYNSVFIPLACG. Residues 706-716 lie on the Extracellular side of the membrane; that stretch reads VLYKANIMLSP. Residues 717–735 traverse the membrane as a helical segment; the sequence is AIAGLAMSLSSVSVVLNSQ. Topologically, residues 736–745 are cytoplasmic; the sequence is RLRNFKIKDH.

This sequence belongs to the cation transport ATPase (P-type) (TC 3.A.3) family. Type IB subfamily.

The protein resides in the cell membrane. It catalyses the reaction Cu(2+)(in) + ATP + H2O = Cu(2+)(out) + ADP + phosphate + H(+). Probably involved in copper export. The sequence is that of Copper-transporting ATPase (copA) from Helicobacter pylori (Campylobacter pylori).